The chain runs to 106 residues: ATP-dependent Clp protease adapter protein ClpS (106 aa).

Belongs to the ClpS family. Binds to the N-terminal domain of the chaperone ClpA.

Involved in the modulation of the specificity of the ClpAP-mediated ATP-dependent protein degradation. The polypeptide is ATP-dependent Clp protease adapter protein ClpS (Pseudoalteromonas atlantica (strain T6c / ATCC BAA-1087)).